A 221-amino-acid polypeptide reads, in one-letter code: Orotate phosphoribosyltransferase (221 aa).

Lysine 26 contributes to the 5-phospho-alpha-D-ribose 1-diphosphate binding site. Residue 34-35 (FF) participates in orotate binding. 5-phospho-alpha-D-ribose 1-diphosphate contacts are provided by residues 72–73 (YK), arginine 99, lysine 100, lysine 103, histidine 105, and 124–132 (DDVITAGTA). The orotate site is built by threonine 128 and arginine 156.

This sequence belongs to the purine/pyrimidine phosphoribosyltransferase family. PyrE subfamily. In terms of assembly, homodimer. Requires Mg(2+) as cofactor.

The catalysed reaction is orotidine 5'-phosphate + diphosphate = orotate + 5-phospho-alpha-D-ribose 1-diphosphate. It functions in the pathway pyrimidine metabolism; UMP biosynthesis via de novo pathway; UMP from orotate: step 1/2. Functionally, catalyzes the transfer of a ribosyl phosphate group from 5-phosphoribose 1-diphosphate to orotate, leading to the formation of orotidine monophosphate (OMP). This is Orotate phosphoribosyltransferase from Colwellia psychrerythraea (strain 34H / ATCC BAA-681) (Vibrio psychroerythus).